The following is a 770-amino-acid chain: Elongation factor G, mitochondrial (770 aa).

Residues 1–24 (MLKLSFRSLTSRLPRLSTLVVRGY) constitute a mitochondrion transit peptide. Residues 57 to 353 (KQIRNIGISA…AVCDYLPNPS (297 aa)) form the tr-type G domain. GTP is bound by residues 66–73 (AHIDSGKT), 151–155 (DTPGH), and 205–208 (NKMD).

The protein belongs to the TRAFAC class translation factor GTPase superfamily. Classic translation factor GTPase family. EF-G/EF-2 subfamily.

It is found in the mitochondrion. It participates in protein biosynthesis; polypeptide chain elongation. In terms of biological role, mitochondrial GTPase that catalyzes the GTP-dependent ribosomal translocation step during translation elongation. During this step, the ribosome changes from the pre-translocational (PRE) to the post-translocational (POST) state as the newly formed A-site-bound peptidyl-tRNA and P-site-bound deacylated tRNA move to the P and E sites, respectively. Catalyzes the coordinated movement of the two tRNA molecules, the mRNA and conformational changes in the ribosome. The polypeptide is Elongation factor G, mitochondrial (mef1) (Schizosaccharomyces pombe (strain 972 / ATCC 24843) (Fission yeast)).